The primary structure comprises 317 residues: MGGVIKSIFTFVLIVEFIIGNLGNSFIALVNCIDWVKGRKISSVDRILTALAISKISLVWLIFGSWCVSVFFPALFATEKMFRMLTNIWTVINHFSVWLATGLGTFYFLKIANFSNSIFLYLKWRVKKVVLVLLLVTSVFLFLNIALINIHINASINGYRRNKTCSSDSSNFTRFSSLIVLTSTVFIFIPFTLSLAMFLLLIFSXWKHRKKMQHTVKRSGDASTKAHRGVKSVXTFFLLYAIFCLSFFISVWTSERLEENLIILSQVMGMAYPSCHSCVLILGNKKLRQASLSVLLWLRYMFKDGEPSGHKEFRESS.

Residues 1 to 7 (MGGVIKS) are Extracellular-facing. Residues 8–28 (IFTFVLIVEFIIGNLGNSFIA) form a helical membrane-spanning segment. Topologically, residues 29 to 55 (LVNCIDWVKGRKISSVDRILTALAISK) are cytoplasmic. The chain crosses the membrane as a helical span at residues 56-76 (ISLVWLIFGSWCVSVFFPALF). Topologically, residues 77 to 87 (ATEKMFRMLTN) are extracellular. Residues T86 and W89 each coordinate cholesterol. The chain crosses the membrane as a helical span at residues 88–108 (IWTVINHFSVWLATGLGTFYF). Residues 109 to 129 (LKIANFSNSIFLYLKWRVKKV) lie on the Cytoplasmic side of the membrane. The chain crosses the membrane as a helical span at residues 130-150 (VLVLLLVTSVFLFLNIALINI). The Extracellular portion of the chain corresponds to 151–184 (HINASINGYRRNKTCSSDSSNFTRFSSLIVLTST). N153, N162, and N171 each carry an N-linked (GlcNAc...) asparagine glycan. V180 lines the cholesterol pocket. Residues 185–205 (VFIFIPFTLSLAMFLLLIFSX) form a helical membrane-spanning segment. Over 206 to 232 (WKHRKKMQHTVKRSGDASTKAHRGVKS) the chain is Cytoplasmic. The chain crosses the membrane as a helical span at residues 233–253 (VXTFFLLYAIFCLSFFISVWT). Residues 254 to 261 (SERLEENL) are Extracellular-facing. A helical membrane pass occupies residues 262 to 282 (IILSQVMGMAYPSCHSCVLIL). Cholesterol-binding residues include S265 and M268. Residues 283–317 (GNKKLRQASLSVLLWLRYMFKDGEPSGHKEFRESS) lie on the Cytoplasmic side of the membrane.

The protein belongs to the G-protein coupled receptor T2R family. Core component of the TAS2R14-GNAI1 complex, consisting of TAS2R14, GNAI1, GNB1 and GNG2; within the complex interacts with GNAI1. Core component of the TAS2R14-GNAT3 complex, consisting of TAS2R14, GNAT3, GNB1 and GNG2; within the complex interacts with GNAT3. Core component of the TAS2R14-GNAS2 complex, consisting of TAS2R14, GNAS2, GNB1 and GNG2; within the complex interacts with GNAS2.

The protein resides in the membrane. The catalysed reaction is Ca(2+)(in) = Ca(2+)(out). The enzyme catalyses 3',5'-cyclic AMP(in) = 3',5'-cyclic AMP(out). With respect to regulation, basal activity is enhanced by binding to bitter tastants, such as flufenamic acid and aristolochic acid. Regulated by cholesterol in a concentration-dependent manner. In terms of biological role, gustducin-linked G-protein coupled receptor that plays a role in the perception of bitterness. The activity of this receptor stimulates GNAT3, activating the gustducin G-protein pathway. Likely plays a role in sensing the chemical composition of the gastrointestinal content and other extra-oral tissues via the inhibitory G-protein pathways. The polypeptide is Taste receptor type 2 member 14 (TAS2R14) (Pan troglodytes (Chimpanzee)).